The primary structure comprises 127 residues: Fluoride-specific ion channel FluC (127 aa).

Helical transmembrane passes span 4–24 (LLLVAAGGAVGSVARYLVGVG), 36–56 (GTFTVNVVGGFLMGCLASWLA), 72–92 (VGVLGGFTTFSSFSLETALMI), and 101–121 (FTYSAASVLLAIAALFAGLLV). Residues glycine 76 and threonine 79 each coordinate Na(+).

Belongs to the fluoride channel Fluc/FEX (TC 1.A.43) family.

Its subcellular location is the cell inner membrane. It catalyses the reaction fluoride(in) = fluoride(out). Its activity is regulated as follows. Na(+) is not transported, but it plays an essential structural role and its presence is essential for fluoride channel function. Fluoride-specific ion channel. Important for reducing fluoride concentration in the cell, thus reducing its toxicity. This chain is Fluoride-specific ion channel FluC, found in Caulobacter vibrioides (strain ATCC 19089 / CIP 103742 / CB 15) (Caulobacter crescentus).